A 194-amino-acid polypeptide reads, in one-letter code: Imidazoleglycerol-phosphate dehydratase (194 aa).

Belongs to the imidazoleglycerol-phosphate dehydratase family.

It localises to the cytoplasm. The catalysed reaction is D-erythro-1-(imidazol-4-yl)glycerol 3-phosphate = 3-(imidazol-4-yl)-2-oxopropyl phosphate + H2O. The protein operates within amino-acid biosynthesis; L-histidine biosynthesis; L-histidine from 5-phospho-alpha-D-ribose 1-diphosphate: step 6/9. This chain is Imidazoleglycerol-phosphate dehydratase, found in Sulfurisphaera tokodaii (strain DSM 16993 / JCM 10545 / NBRC 100140 / 7) (Sulfolobus tokodaii).